Reading from the N-terminus, the 370-residue chain is 3-dehydroquinate synthase (370 aa).

NAD(+) contacts are provided by residues 112 to 116, 136 to 137, K149, K158, and 176 to 179; these read GVIGD, TT, and TLAT. Residues E191, H254, and H276 each coordinate Zn(2+).

The protein belongs to the sugar phosphate cyclases superfamily. Dehydroquinate synthase family. The cofactor is Co(2+). It depends on Zn(2+) as a cofactor. NAD(+) is required as a cofactor.

It is found in the cytoplasm. It catalyses the reaction 7-phospho-2-dehydro-3-deoxy-D-arabino-heptonate = 3-dehydroquinate + phosphate. The protein operates within metabolic intermediate biosynthesis; chorismate biosynthesis; chorismate from D-erythrose 4-phosphate and phosphoenolpyruvate: step 2/7. Its function is as follows. Catalyzes the conversion of 3-deoxy-D-arabino-heptulosonate 7-phosphate (DAHP) to dehydroquinate (DHQ). In Xylella fastidiosa (strain M12), this protein is 3-dehydroquinate synthase.